A 118-amino-acid polypeptide reads, in one-letter code: Ribosome-binding factor A (118 aa).

The protein belongs to the RbfA family. Monomer. Binds 30S ribosomal subunits, but not 50S ribosomal subunits or 70S ribosomes.

Its subcellular location is the cytoplasm. Functionally, one of several proteins that assist in the late maturation steps of the functional core of the 30S ribosomal subunit. Associates with free 30S ribosomal subunits (but not with 30S subunits that are part of 70S ribosomes or polysomes). Required for efficient processing of 16S rRNA. May interact with the 5'-terminal helix region of 16S rRNA. The protein is Ribosome-binding factor A of Shouchella clausii (strain KSM-K16) (Alkalihalobacillus clausii).